The sequence spans 174 residues: Large ribosomal subunit protein uL15 (174 aa).

2 disordered regions span residues 1 to 57 and 147 to 174; these read MKLH…QMRI and PWVV…PQKA. Over residues 21–35 the composition is skewed to gly residues; it reads RGIGSGKGKTGGKGM.

This sequence belongs to the universal ribosomal protein uL15 family. In terms of assembly, part of the 50S ribosomal subunit.

Binds to the 23S rRNA. This is Large ribosomal subunit protein uL15 from Roseiflexus sp. (strain RS-1).